The chain runs to 165 residues: Lipoprotein signal peptidase (165 aa).

Helical transmembrane passes span 9–29, 69–89, and 98–118; these read FLAI…VLLY, KYFL…FLFL, and IRFS…DIVF. Residues Asp124 and Asp142 contribute to the active site. A helical membrane pass occupies residues 133–153; sequence WFFPTFNFADIFISLGTLIFI.

Belongs to the peptidase A8 family.

It is found in the cell inner membrane. It carries out the reaction Release of signal peptides from bacterial membrane prolipoproteins. Hydrolyzes -Xaa-Yaa-Zaa-|-(S,diacylglyceryl)Cys-, in which Xaa is hydrophobic (preferably Leu), and Yaa (Ala or Ser) and Zaa (Gly or Ala) have small, neutral side chains.. It functions in the pathway protein modification; lipoprotein biosynthesis (signal peptide cleavage). In terms of biological role, this protein specifically catalyzes the removal of signal peptides from prolipoproteins. This chain is Lipoprotein signal peptidase, found in Chlamydia abortus (strain DSM 27085 / S26/3) (Chlamydophila abortus).